A 185-amino-acid chain; its full sequence is Ribose 1,5-bisphosphate phosphokinase PhnN (185 aa).

It belongs to the ribose 1,5-bisphosphokinase family.

It catalyses the reaction alpha-D-ribose 1,5-bisphosphate + ATP = 5-phospho-alpha-D-ribose 1-diphosphate + ADP. Its pathway is metabolic intermediate biosynthesis; 5-phospho-alpha-D-ribose 1-diphosphate biosynthesis; 5-phospho-alpha-D-ribose 1-diphosphate from D-ribose 5-phosphate (route II): step 3/3. Its function is as follows. Catalyzes the phosphorylation of ribose 1,5-bisphosphate to 5-phospho-D-ribosyl alpha-1-diphosphate (PRPP). This chain is Ribose 1,5-bisphosphate phosphokinase PhnN, found in Escherichia coli (strain SMS-3-5 / SECEC).